A 264-amino-acid chain; its full sequence is MAAAAGGGTREEMVYMAKLAEQAERYEEMVEFMEKVVTAAAAGGGGELTVEERNLLSVAYKNVIGARRASWRIVSSIEQKEEGRGAAGHAAAARSYRARVEAELSNICAGILRLLDERLVPAAAAVDAKVFYLKMKGDYHRYLAEFKTGAERKDAADATLAAYQAAQDIAMKELSPTHPIRLGLALNFSVFYYEILNSPDRACTLAKQAFDEAISELDTLGEESYKDSTLIMQLLRDNLTLWTSDMQDDGGDEMRDATKPEDEH.

The tract at residues 245–264 is disordered; sequence DMQDDGGDEMRDATKPEDEH. Residues 252 to 264 are compositionally biased toward basic and acidic residues; that stretch reads DEMRDATKPEDEH.

This sequence belongs to the 14-3-3 family.

Its function is as follows. Is associated with a DNA binding complex that binds to the G box, a well-characterized cis-acting DNA regulatory element found in plant genes. The protein is 14-3-3-like protein GF14-A (GF14A) of Oryza sativa subsp. japonica (Rice).